Here is a 29-residue protein sequence, read N- to C-terminus: Kalata-B4 (29 aa).

The cyclopeptide (Gly-Asp) cross-link spans 1 to 29 (GLPVCGETCVGGTCNTPGCTCSWPVCTRD). 3 disulfides stabilise this stretch: Cys-5-Cys-19, Cys-9-Cys-21, and Cys-14-Cys-26.

This is a cyclic peptide.

In terms of biological role, probably participates in a plant defense mechanism. In Oldenlandia affinis, this protein is Kalata-B4.